A 131-amino-acid chain; its full sequence is Putative gene 51 protein (131 aa).

The chain is Putative gene 51 protein (51) from Bacillus phage SP01 (Bacteriophage SP01).